Here is an 87-residue protein sequence, read N- to C-terminus: Signal recognition particle 19 kDa protein (87 aa).

Belongs to the SRP19 family. In terms of assembly, part of the signal recognition particle protein translocation system, which is composed of SRP and FtsY. Archaeal SRP consists of a 7S RNA molecule of 300 nucleotides and two protein subunits: SRP54 and SRP19.

It is found in the cytoplasm. Its function is as follows. Involved in targeting and insertion of nascent membrane proteins into the cytoplasmic membrane. Binds directly to 7S RNA and mediates binding of the 54 kDa subunit of the SRP. The chain is Signal recognition particle 19 kDa protein from Methanocaldococcus jannaschii (strain ATCC 43067 / DSM 2661 / JAL-1 / JCM 10045 / NBRC 100440) (Methanococcus jannaschii).